The chain runs to 941 residues: UvrABC system protein A (941 aa).

An ATP-binding site is contributed by 37–44 (GLSGSGKS). A C4-type zinc finger spans residues 260–287 (CFKCKMSFEELEPLSFSFNSPKGACESC). ABC transporter domains follow at residues 316–585 (IFGY…NNHS) and 605–937 (KEKH…KFLA). 637–644 (GVSGSGKS) contacts ATP. The C4-type zinc finger occupies 737–763 (CEKCQGDGDIKIEMHFLPDVLVQCDSC).

It belongs to the ABC transporter superfamily. UvrA family. As to quaternary structure, forms a heterotetramer with UvrB during the search for lesions.

The protein resides in the cytoplasm. The UvrABC repair system catalyzes the recognition and processing of DNA lesions. UvrA is an ATPase and a DNA-binding protein. A damage recognition complex composed of 2 UvrA and 2 UvrB subunits scans DNA for abnormalities. When the presence of a lesion has been verified by UvrB, the UvrA molecules dissociate. This is UvrABC system protein A from Helicobacter pylori (strain J99 / ATCC 700824) (Campylobacter pylori J99).